The primary structure comprises 141 residues: Subtilase cytotoxin subunit B (141 aa).

An N-terminal signal peptide occupies residues 1 to 23 (MTIKRFFVCAGIMGCLSLNPAMA). N-glycoloyl-alpha-neuraminate contacts are provided by residues 33–35 (MFS) and glutamine 59. The segment at 89-94 (YFYTTG) is hydrophobic patch important for binding to SubA. Tyrosine 101 is an N-glycoloyl-alpha-neuraminate binding site.

In terms of assembly, forms a complex with SubA with the stoichiometry SubA1:SubB5 (called SubAB5). Each SubB subunit makes different contacts with the single SubA subunit. This subunit alone forms pentamers.

It is found in the secreted. It localises to the host cytoplasm. The protein localises to the host cytosol. The protein resides in the host endoplasmic reticulum lumen. Functionally, receptor-binding subunit of subtilase cytotoxin SubAB5. Required for receptor-binding and thus correct trafficking in the host cell. Has specificity for host glycans terminating in the sialic acid N-glycolyl-alpha-neuraminic acid (Neu5Gc); each subunit in the SubB pentamer binds one Neu5Gc. The protease subunit (SubA) cleaves host BiP/HSPA5, inducing the host endoplasmic reticulum stress response and eventual cell death. Culture supernatant of E.coli expressing both subA and subB are toxic for Vero cells (African green monkey kidney cell line), Chinese hamster ovary cells and Hct-8 cells (human colonic epithelial cell line); the subunits are not toxic individually. Purified SubAB5 is highly toxic, &lt;0.1 pg is able to kill at least 50% of 30'000 Vero cells in a microtiter plate assay after 3 days; no cytotoxicity is seen at 24 hours. Preabsorption with cells expressing a ganglioside GM2 mimic reduced cytotoxicity of SubAB5 by 93% in the Vero cytotoxicity assay. Intraperitoneal injection of 200 ng of purified SubAB5 kills mice; the higher the dose the faster the mice die. Animals injected with purified SubAB5 have microvascular thrombi in the brain and other organs, including the renal tubules and glomeruli. Mice fed E.coli cells expressing cloned SubAB5 experience drastic weight loss and appear ill and lethargic. SubB alone at 2.5 ug/ml causes vacuolation of Vero cells, which requires the V-type ATPase proton pump; treated cells die. Protein synthesis in Vero cells is transiently inhibited by SubAB5; both subunits are required for this effect. Inhibition of protein synthesis is prevented by brefeldin A; cells are arrested in the G1 phase. SubAB5 at 100 ng/ml induced caspase-dependent apoptosis in Vero cells through mitochondrial membrane damage. This chain is Subtilase cytotoxin subunit B, found in Escherichia coli.